A 235-amino-acid chain; its full sequence is LexA repressor (235 aa).

Positions 47–67 form a DNA-binding region, H-T-H motif; the sequence is IREIADAVGLTSTSSVAHQLR. Catalysis depends on for autocatalytic cleavage activity residues S159 and K196.

This sequence belongs to the peptidase S24 family. Homodimer.

The enzyme catalyses Hydrolysis of Ala-|-Gly bond in repressor LexA.. Its function is as follows. Represses a number of genes involved in the response to DNA damage (SOS response), including recA and lexA. In the presence of single-stranded DNA, RecA interacts with LexA causing an autocatalytic cleavage which disrupts the DNA-binding part of LexA, leading to derepression of the SOS regulon and eventually DNA repair. The polypeptide is LexA repressor (Mycobacterium leprae (strain Br4923)).